Consider the following 38-residue polypeptide: Large ribosomal subunit protein bL36 (38 aa).

The protein belongs to the bacterial ribosomal protein bL36 family.

The protein is Large ribosomal subunit protein bL36 of Synechocystis sp. (strain ATCC 27184 / PCC 6803 / Kazusa).